The following is a 218-amino-acid chain: MTQDEMKNAAAIKALEFIENDTIVGVGTGSTVNFFIEALASMKDKIAGAVSSSEESTKRLKAHGIEVFDLNSVDVLDVYVDGADEITRHMSMIKGGGAALTREKIVAAVAKKFICIADDSKQVKVLGNFPLPVEVIPMARSYVARELVKLGGDPVYRQGVTTDNGNVILDVYNLEILDPKALETQINAIVGVVTNGLFALRGADILVLGSKDGIQVIQ.

Residues 28–31, 81–84, and 94–97 each bind substrate; these read TGST, DGAD, and KGGG. E103 serves as the catalytic Proton acceptor. Residue K121 coordinates substrate.

This sequence belongs to the ribose 5-phosphate isomerase family. As to quaternary structure, homodimer.

The enzyme catalyses aldehydo-D-ribose 5-phosphate = D-ribulose 5-phosphate. It functions in the pathway carbohydrate degradation; pentose phosphate pathway; D-ribose 5-phosphate from D-ribulose 5-phosphate (non-oxidative stage): step 1/1. In terms of biological role, catalyzes the reversible conversion of ribose-5-phosphate to ribulose 5-phosphate. The polypeptide is Ribose-5-phosphate isomerase A (Colwellia psychrerythraea (strain 34H / ATCC BAA-681) (Vibrio psychroerythus)).